A 306-amino-acid polypeptide reads, in one-letter code: Ornithine carbamoyltransferase (306 aa).

Residues 46-49, glutamine 73, arginine 97, and 124-127 contribute to the carbamoyl phosphate site; these read STRT and HPTQ. Residues asparagine 156, aspartate 220, and 224–225 contribute to the L-ornithine site; that span reads SM. Carbamoyl phosphate-binding positions include 260–261 and arginine 288; that span reads CL.

Belongs to the aspartate/ornithine carbamoyltransferase superfamily. OTCase family.

The protein localises to the cytoplasm. It carries out the reaction carbamoyl phosphate + L-ornithine = L-citrulline + phosphate + H(+). The protein operates within amino-acid biosynthesis; L-arginine biosynthesis; L-arginine from L-ornithine and carbamoyl phosphate: step 1/3. Its function is as follows. Reversibly catalyzes the transfer of the carbamoyl group from carbamoyl phosphate (CP) to the N(epsilon) atom of ornithine (ORN) to produce L-citrulline. This Campylobacter jejuni (strain RM1221) protein is Ornithine carbamoyltransferase.